A 67-amino-acid chain; its full sequence is Arasin 2 (67 aa).

The first 25 residues, methionine 1–proline 25, serve as a signal peptide directing secretion. The tract at residues glutamate 22 to isoleucine 44 is disordered. Residues proline 31–isoleucine 44 are compositionally biased toward pro residues. 2 disulfides stabilise this stretch: cysteine 50/cysteine 59 and cysteine 52/cysteine 57.

As to quaternary structure, interacts with chitin through the N-terminal region (26-48). This interaction may be important, since chitin is a component of the fungal cell wall, as well as of the crab exoskeleton (permitting a possible action of arasin in wound healing in case of lesions). Post-translationally, disulfide bonds are important for activity especially against Gram-negative bacteria, since the linearization of the peptide causes a strong decrease of activity on these bacteria. Mainly expressed in hemocytes. No or very low expression in heart, gills, inestines, and epidermis.

Antimicrobial peptide that has a large activity spectrum with activity against Gram-positive, Gram-negative bacteria, as well as against fungi. Shows activity at micromolar concentrations. Displays minimal inhibitory concentration (MIC) values lower than minimal bactericidal concentrations (MBC). May have a dual mode of action depending on the peptide concentrations. At MIC concentrations, the peptide penetrates into the cytoplasm of target cells (tested on the Gram-negative E.coli). The two inner membrane proteins YgdD and SbmA may be required for this uptake. At concentrations higher than MIC, arasin may act by disrupting membranes. Does not show hemolytic activity. This Hyas araneus (Atlantic lyre crab) protein is Arasin 2.